Reading from the N-terminus, the 328-residue chain is uncharacterized protein (328 aa).

The SIS domain maps to 37–179; sequence LTERLLCHQG…AMTVLRCRKI (143 aa). ATP is bound at residue 52–57; it reads GIGKSG. CBS domains are found at residues 205–264 and 273–328; these read LSPR…GGAI and MTRK…AGLL.

Belongs to the SIS family. GutQ/KpsF subfamily.

This is an uncharacterized protein from Chlamydia muridarum (strain MoPn / Nigg).